Here is a 532-residue protein sequence, read N- to C-terminus: GH3 domain-containing protein (532 aa).

The signal sequence occupies residues 1–18 (MLLLWLLLLLLLLVPLLA). A disordered region spans residues 100–123 (LTQTSHTQEQESEETLPSPASPQY). N-linked (GlcNAc...) asparagine glycans are attached at residues Asn356 and Asn451.

It belongs to the GH3 family. In terms of tissue distribution, highly expressed in mammary tissues from mature virgins and at day 13 of pregnancy, and at lower level during lactation. Expressed at intermediate level in liver. Expressed at lower level in kidney, heart and brain.

The protein resides in the endoplasmic reticulum. Its subcellular location is the nucleus envelope. The polypeptide is GH3 domain-containing protein (Ghdc) (Mus musculus (Mouse)).